Here is a 319-residue protein sequence, read N- to C-terminus: MVLPPPDRRHVCLTTLVIMGSMAVMDAYLVEQNQGPRKIGVCIIVLVGDVCFLLVLRYVAVWVGAEVRTAKRGYAMILWFLYIFVLEIKLYFIFQNYKAARRGAADPVARKALTLLLSVCVPGLFLLLVALDRMEYVRTFRKREDLRGRLFWVALDLLDLLDMQASLWEPPRSGLPLWAEGLTFFYCYMLLLVLPCVALSEVSMQGEHIAPQKMMLYPVLSLATVNVVAVLARAANMALFRDSRVSAIFVGKNVVALATKACTFLEYRRQVRDFPPPALSLELQPPPPQRNSVPPPPPPLHGPPGRPHMSSPTRDPLDT.

7 helical membrane-spanning segments follow: residues 10 to 30 (HVCL…AYLV), 43 to 63 (IIVL…AVWV), 74 to 94 (YAMI…YFIF), 112 to 132 (ALTL…VALD), 150 to 170 (LFWV…LWEP), 174 to 194 (GLPL…LLVL), and 214 to 234 (MMLY…LARA). Residues 277–306 (PALSLELQPPPPQRNSVPPPPPPLHGPPGR) are compositionally biased toward pro residues. The interval 277-319 (PALSLELQPPPPQRNSVPPPPPPLHGPPGRPHMSSPTRDPLDT) is disordered.

Belongs to the TMEM121 family. Highly expressed in heart and detected in pancreas, liver and skeletal muscle.

It localises to the membrane. Functionally, may play a role in MAPK signaling. The chain is Transmembrane protein 121 (TMEM121) from Homo sapiens (Human).